Here is a 605-residue protein sequence, read N- to C-terminus: Protein Spindly (605 aa).

At Met1 the chain carries N-acetylmethionine. Positions Thr3 to Glu442 form a coiled coil. A phosphoserine mark is found at Ser513, Ser515, and Ser555. The interval Leu545–Glu581 is disordered. The span at Leu564 to Glu581 shows a compositional bias: basic and acidic residues.

Belongs to the Spindly family. Interacts with KNTC1 and ZW10. These interactions appear weak and may be transient or indirect. Interacts with dynein intermediate chain and dynactin (DCTN1). Interacts with the catalytically active form of USP45. In terms of processing, monoubiquitinated with'Lys-48' linkage. Deubiquitinated by USP45.

It is found in the cytoplasm. The protein resides in the cytoskeleton. Its subcellular location is the microtubule organizing center. The protein localises to the centrosome. It localises to the chromosome. It is found in the centromere. The protein resides in the kinetochore. Its subcellular location is the nucleus. The protein localises to the spindle pole. In terms of biological role, required for the localization of dynein and dynactin to the mitotic kintochore. Dynein is believed to control the initial lateral interaction between the kinetochore and spindle microtubules and to facilitate the subsequent formation of end-on kinetochore-microtubule attachments mediated by the NDC80 complex. Also required for correct spindle orientation. Does not appear to be required for the removal of spindle assembly checkpoint (SAC) proteins from the kinetochore upon bipolar spindle attachment. Acts as an adapter protein linking the dynein motor complex to various cargos and converts dynein from a non-processive to a highly processive motor in the presence of dynactin. Facilitates the interaction between dynein and dynactin and activates dynein processivity (the ability to move along a microtubule for a long distance without falling off the track). Plays a role in cell migration. The protein is Protein Spindly of Macaca fascicularis (Crab-eating macaque).